The primary structure comprises 258 residues: MLILISPAKTLDYQSPLTTTRYTLPELLDNSQQLIHEARKLTPPQISTLMRISDKLAGINAARFHDWQRDFTPENARQAILAFKGDVYTGLQAETFSEDDFDFAQQHLRMLSGLYGVLRPLDLMQPYRLEMGIRLENARGKDLYQFWGDIITNKLNEALAAQGDNVVINLASDEYFKSVKPKKLNAEIIKPVFLDEKNGKFKIISFYAKKARGLMSRFIIENRLTKPEQLTGFNSEGYFFDEDSSSNGELVFKRYEQR.

This sequence belongs to the UPF0246 family.

In Escherichia coli (strain SE11), this protein is UPF0246 protein YaaA.